A 218-amino-acid chain; its full sequence is Tubulin polymerization-promoting protein (218 aa).

The interval methionine 1 to proline 45 is disordered. Residues alanine 2–phenylalanine 115 form a mediates interaction with LIMK1 region. A Phosphothreonine modification is found at threonine 15. A phosphoserine mark is found at serine 19, serine 31, and serine 34. The span at glutamate 33 to proline 45 shows a compositional bias: low complexity. The Zn(2+) site is built by histidine 60, histidine 71, cysteine 79, and cysteine 82. A Phosphothreonine modification is found at threonine 91. Serine 106 carries the phosphoserine modification. Serine 151 is a glycosylation site (O-linked (GlcNAc) serine). A phosphoserine mark is found at serine 158 and serine 159. The interval leucine 165–valine 192 is disordered. A compositionally biased stretch (basic and acidic residues) spans serine 174–glycine 183.

Belongs to the TPPP family. Homodimer. Binds tubulin; binding is inhibited by GTP. Interacts with MAPK1. Interacts with GAPDH; the interaction is direct. Interacts with LIMK1 (via the PDZ domain); the interaction is direct. Interacts with LIMK2. Interacts with HDAC6; thereby inhibiting the tubulin deacetylase activity of HDAC6. Interacts with aggregated SNCA; may have a pro-aggregatory role in synucleinopathies. Interacts with DYNLL1. Interacts (via C-terminus) with S100A2, S100A6 and S100B; these interactions inhibit TPPP dimerization. It depends on Mg(2+) as a cofactor. In terms of processing, phosphorylated by LIMK1 on serine residues; phosphorylation may alter the tubulin polymerization activity. Phosphorylation by LIMK2, but not LIMK1, regulates astral microtubule organization at early stage of mitosis. Phosphorylation by ROCK1 at Ser-31, Ser-106 and Ser-158 inhibits interaction with HDAC6, resulting in decreased acetylation of tubulin, increased cell motility and entry into S-phase. Phosphorylation by CDK1 inhibits the microtubule polymerizing activity. Post-translationally, degraded by the proteasome; zinc-binding inhibits degradation by the proteasome. Predominantly expressed in mature oligodendrocytes.

The protein resides in the golgi outpost. It is found in the cytoplasm. Its subcellular location is the cytoskeleton. The protein localises to the microtubule organizing center. It localises to the nucleus. The protein resides in the spindle. The catalysed reaction is GTP + H2O = GDP + phosphate + H(+). Functionally, regulator of microtubule dynamics that plays a key role in myelination by promoting elongation of the myelin sheath. Acts as a microtubule nucleation factor in oligodendrocytes: specifically localizes to the postsynaptic Golgi apparatus region, also named Golgi outpost, and promotes microtubule nucleation, an important step for elongation of the myelin sheath. Required for both uniform polarized growth of distal microtubules as well as directing the branching of proximal processes. Shows magnesium-dependent GTPase activity; the role of the GTPase activity is unclear. In addition to microtubule nucleation activity, also involved in microtubule bundling and stabilization of existing microtubules, thereby maintaining the integrity of the microtubule network. Regulates microtubule dynamics by promoting tubulin acetylation: acts by inhibiting the tubulin deacetylase activity of HDAC6. Also regulates cell migration: phosphorylation by ROCK1 inhibits interaction with HDAC6, resulting in decreased acetylation of tubulin and increased cell motility. Plays a role in cell proliferation by regulating the G1/S-phase transition. Involved in astral microtubule organization and mitotic spindle orientation during early stage of mitosis; this process is regulated by phosphorylation by LIMK2. In Rattus norvegicus (Rat), this protein is Tubulin polymerization-promoting protein.